The primary structure comprises 614 residues: Probable glycerol-3-phosphate dehydrogenase (614 aa).

Residue 57-85 (DLVVVGGGSTGAGCALDGATRGLKVALVD) coordinates FAD. The tract at residues 595–614 (MECPEEKRHRGERRLPPQEK) is disordered. Positions 598 to 614 (PEEKRHRGERRLPPQEK) are enriched in basic and acidic residues.

It belongs to the FAD-dependent glycerol-3-phosphate dehydrogenase family. FAD is required as a cofactor.

The protein localises to the cytoplasm. It catalyses the reaction a quinone + sn-glycerol 3-phosphate = dihydroxyacetone phosphate + a quinol. Its pathway is polyol metabolism; glycerol degradation via glycerol kinase pathway; glycerone phosphate from sn-glycerol 3-phosphate (anaerobic route): step 1/1. This is Probable glycerol-3-phosphate dehydrogenase from Encephalitozoon cuniculi (strain GB-M1) (Microsporidian parasite).